A 173-amino-acid polypeptide reads, in one-letter code: Cytochrome c-type biogenesis protein CcmE (173 aa).

Residues 1 to 7 (MTRKSRR) lie on the Cytoplasmic side of the membrane. A helical; Signal-anchor for type II membrane protein membrane pass occupies residues 8–28 (LILIAACGAVLALALGLILSA). Residues 29–173 (MSGSIVFFRS…DATLGQRSER (145 aa)) lie on the Periplasmic side of the membrane. Histidine 122 and tyrosine 126 together coordinate heme. A disordered region spans residues 134–173 (ALKAQGRWQEGGGKDASKAAPKDAAKPETADATLGQRSER). Positions 145-162 (GGKDASKAAPKDAAKPET) are enriched in basic and acidic residues.

Belongs to the CcmE/CycJ family.

The protein resides in the cell inner membrane. Its function is as follows. Heme chaperone required for the biogenesis of c-type cytochromes. Transiently binds heme delivered by CcmC and transfers the heme to apo-cytochromes in a process facilitated by CcmF and CcmH. The sequence is that of Cytochrome c-type biogenesis protein CcmE from Methylorubrum extorquens (strain CM4 / NCIMB 13688) (Methylobacterium extorquens).